The sequence spans 444 residues: Proline--tRNA ligase (444 aa).

Belongs to the class-II aminoacyl-tRNA synthetase family. ProS type 2 subfamily. In terms of assembly, homodimer.

Its subcellular location is the cytoplasm. The enzyme catalyses tRNA(Pro) + L-proline + ATP = L-prolyl-tRNA(Pro) + AMP + diphosphate. In terms of biological role, catalyzes the attachment of proline to tRNA(Pro) in a two-step reaction: proline is first activated by ATP to form Pro-AMP and then transferred to the acceptor end of tRNA(Pro). The sequence is that of Proline--tRNA ligase from Methylobacterium sp. (strain 4-46).